Reading from the N-terminus, the 749-residue chain is Dynamin-1-like protein (749 aa).

At Met-1 the chain carries N-acetylmethionine. In terms of domain architecture, Dynamin-type G spans 22–315 (IIQLPQIVVV…LMHHIRDCLP (294 aa)). The tract at residues 32-39 (GTQSSGKS) is G1 motif. Residue 32–40 (GTQSSGKSS) coordinates GTP. Positions 58–60 (VTR) are G2 motif. The interval 74 to 93 (DKRKTTGEENDPATWKNSRH) is disordered. The G3 motif stretch occupies residues 159–162 (DLPG). Positions 228 to 231 (TKLD) are G4 motif. Residues 228 to 234 (TKLDLMD) and 259 to 262 (NRSQ) each bind GTP. The tract at residues 258-261 (VNRS) is G5 motif. Positions 357–502 (YCNTIEGTAK…NEMVHNLVAI (146 aa)) are middle domain. Residues 461–698 (NYSTQELLRF…NHVKDTLQSE (238 aa)) are interaction with GSK3B. The tract at residues 515 to 582 (ADACGLMNNN…IQESRRETKN (68 aa)) is b domain. Residues 536–604 (ELPSAVSRDK…QEPTTGNWRG (69 aa)) are disordered. Ser-542 bears the Phosphoserine mark. Glycyl lysine isopeptide (Lys-Gly) (interchain with G-Cter in SUMO) cross-links involve residues Lys-545 and Lys-548. The span at 550–567 (PSALAPASQEPSPAASAE) shows a compositional bias: low complexity. Residue Ser-561 is modified to Phosphoserine. Residues 568–581 (ADGKLIQESRRETK) show a composition bias toward basic and acidic residues. Glycyl lysine isopeptide (Lys-Gly) (interchain with G-Cter in SUMO) cross-links involve residues Lys-571 and Lys-581. 2 O-linked (GlcNAc) threonine glycosylation sites follow: Thr-598 and Thr-599. A Glycyl lysine isopeptide (Lys-Gly) (interchain with G-Cter in SUMO) cross-link involves residue Lys-607. Lys-610 is subject to N6-acetyllysine; alternate. Residue Lys-610 forms a Glycyl lysine isopeptide (Lys-Gly) (interchain with G-Cter in SUMO); alternate linkage. Lys-619 participates in a covalent cross-link: Glycyl lysine isopeptide (Lys-Gly) (interchain with G-Cter in SUMO). Phosphoserine is present on Ser-620. Lys-621 participates in a covalent cross-link: Glycyl lysine isopeptide (Lys-Gly) (interchain with G-Cter in SUMO). Ser-629 carries the post-translational modification Phosphoserine; by CDK1 and PINK1. Ser-650 bears the Phosphoserine; by CAMK1 and PKA mark. At Cys-657 the chain carries S-nitrosocysteine. The GED domain maps to 657–748 (CEVIERLIKS…IIAEIRETHL (92 aa)). Residues 667–681 (YFLIVRKNIQDSVPK) are important for homodimerization.

This sequence belongs to the TRAFAC class dynamin-like GTPase superfamily. Dynamin/Fzo/YdjA family. Homotetramer; dimerizes through the N-terminal GTP-middle region of one molecule binding to the GED domain of another DNM1L molecule. Oligomerizes in a GTP-dependent manner to form membrane-associated tubules with a spiral pattern. Interacts with GSK3B and MARCHF5. Interacts (via the GTPase and B domains) with UBE2I; the interaction promotes sumoylation of DNM1L, mainly in its B domain. Interacts with PPP3CA; the interaction dephosphorylates DNM1L and regulates its transition to mitochondria. Interacts with BCL2L1 isoform BCL-X(L) and CLTA; DNM1L and BCL2L1 isoform BCL-X(L) may form a complex in synaptic vesicles that also contains clathrin and MFF. Interacts with MFF; the interaction is inhinited by C11orf65/MFI. Interacts with FIS1. Interacts with MIEF2 and MIEF1; GTP-dependent, regulates GTP hydrolysis and DNM1L oligomerization. Interacts with PGAM5; this interaction leads to dephosphorylation at Ser-656 and activation of GTPase activity and eventually to mitochondria fragmentation. Interacts with RALBP1; during mitosis, recruits DNM1L to the mitochondrion and mediates its activation by the mitotic kinase cyclin B-CDK1. In terms of processing, phosphorylation/dephosphorylation events on two sites near the GED domain regulate mitochondrial fission. Phosphorylation on Ser-650 by CAMK1 and PKA inhibits the GTPase activity, leading to a defect in mitochondrial fission promoting mitochondrial elongation. Dephosphorylated on this site by PPP3CA which promotes mitochondrial fission. Phosphorylation on Ser-629 by CDK1 and PINK1 activates the GTPase activity and promotes mitochondrial fission. Phosphorylated in a circadian manner at Ser-650. Sumoylated on various lysine residues within the B domain, probably by MUL1. Sumoylation positively regulates mitochondrial fission. Desumoylated by SENP5 during G2/M transition of mitosis. Appears to be linked to its catalytic activity. Post-translationally, S-nitrosylation increases DNM1L dimerization, mitochondrial fission and causes neuronal damage. In terms of processing, O-GlcNAcylation augments the level of the GTP-bound active form of DNM1L and induces translocation from the cytoplasm to mitochondria in cardiomyocytes. It also decreases phosphorylation at Ser-650. Ubiquitination by MARCHF5 affects mitochondrial morphology.

The protein resides in the cytoplasm. It localises to the cytosol. It is found in the golgi apparatus. The protein localises to the endomembrane system. Its subcellular location is the mitochondrion outer membrane. The protein resides in the peroxisome. It localises to the membrane. It is found in the clathrin-coated pit. The protein localises to the cytoplasmic vesicle. Its subcellular location is the secretory vesicle. The protein resides in the synaptic vesicle membrane. It catalyses the reaction GTP + H2O = GDP + phosphate + H(+). Functionally, functions in mitochondrial and peroxisomal division. Mediates membrane fission through oligomerization into membrane-associated tubular structures that wrap around the scission site to constrict and sever the mitochondrial membrane through a GTP hydrolysis-dependent mechanism. The specific recruitment at scission sites is mediated by membrane receptors like MFF, MIEF1 and MIEF2 for mitochondrial membranes. While the recruitment by the membrane receptors is GTP-dependent, the following hydrolysis of GTP induces the dissociation from the receptors and allows DNM1L filaments to curl into closed rings that are probably sufficient to sever a double membrane. Acts downstream of PINK1 to promote mitochondrial fission in a PRKN-dependent manner. Plays an important role in mitochondrial fission during mitosis. Through its function in mitochondrial division, ensures the survival of at least some types of postmitotic neurons, including Purkinje cells, by suppressing oxidative damage. Required for normal brain development, including that of cerebellum. Facilitates developmentally regulated apoptosis during neural tube formation. Required for a normal rate of cytochrome c release and caspase activation during apoptosis; this requirement may depend upon the cell type and the physiological apoptotic cues. Required for formation of endocytic vesicles. Proposed to regulate synaptic vesicle membrane dynamics through association with BCL2L1 isoform Bcl-X(L) which stimulates its GTPase activity in synaptic vesicles; the function may require its recruitment by MFF to clathrin-containing vesicles. Required for programmed necrosis execution. Rhythmic control of its activity following phosphorylation at Ser-650 is essential for the circadian control of mitochondrial ATP production. In Bos taurus (Bovine), this protein is Dynamin-1-like protein.